We begin with the raw amino-acid sequence, 286 residues long: Small ribosomal subunit protein uS2 (286 aa).

Positions 257 to 286 (KDNKSNKSNTINADENIKESDLIGGSNNEG) are disordered.

The protein belongs to the universal ribosomal protein uS2 family.

The protein is Small ribosomal subunit protein uS2 of Ehrlichia ruminantium (strain Gardel).